The chain runs to 79 residues: RNA-binding protein Hfq (79 aa).

The Sm domain maps to 10–70 (DAFLNHVRKT…ISTIMPAQPI (61 aa)).

This sequence belongs to the Hfq family. Homohexamer.

In terms of biological role, RNA chaperone that binds small regulatory RNA (sRNAs) and mRNAs to facilitate mRNA translational regulation in response to envelope stress, environmental stress and changes in metabolite concentrations. Also binds with high specificity to tRNAs. The chain is RNA-binding protein Hfq from Ruegeria sp. (strain TM1040) (Silicibacter sp.).